The following is a 436-amino-acid chain: GTPase Der (436 aa).

2 consecutive EngA-type G domains span residues 4-167 (PTVA…PVEE) and 175-351 (IRFS…ESQN). Residues 10–17 (GRPNVGKS), 57–61 (DTGGI), 119–122 (NKVD), 181–188 (GRPNVGKS), 229–233 (DTAGM), and 294–297 (NKWD) contribute to the GTP site. One can recognise a KH-like domain in the interval 352–436 (KRIPSAVLND…PIHLIARKRK (85 aa)).

The protein belongs to the TRAFAC class TrmE-Era-EngA-EngB-Septin-like GTPase superfamily. EngA (Der) GTPase family. Associates with the 50S ribosomal subunit.

GTPase that plays an essential role in the late steps of ribosome biogenesis. The sequence is that of GTPase Der from Streptococcus pyogenes serotype M28 (strain MGAS6180).